The chain runs to 482 residues: Probable glycine dehydrogenase (decarboxylating) subunit 2 (482 aa).

The residue at position 264 (Lys-264) is an N6-(pyridoxal phosphate)lysine.

This sequence belongs to the GcvP family. C-terminal subunit subfamily. As to quaternary structure, the glycine cleavage system is composed of four proteins: P, T, L and H. In this organism, the P 'protein' is a heterodimer of two subunits. Pyridoxal 5'-phosphate serves as cofactor.

It catalyses the reaction N(6)-[(R)-lipoyl]-L-lysyl-[glycine-cleavage complex H protein] + glycine + H(+) = N(6)-[(R)-S(8)-aminomethyldihydrolipoyl]-L-lysyl-[glycine-cleavage complex H protein] + CO2. In terms of biological role, the glycine cleavage system catalyzes the degradation of glycine. The P protein binds the alpha-amino group of glycine through its pyridoxal phosphate cofactor; CO(2) is released and the remaining methylamine moiety is then transferred to the lipoamide cofactor of the H protein. The chain is Probable glycine dehydrogenase (decarboxylating) subunit 2 from Treponema denticola (strain ATCC 35405 / DSM 14222 / CIP 103919 / JCM 8153 / KCTC 15104).